Consider the following 268-residue polypeptide: tRNA pseudouridine synthase A (268 aa).

Aspartate 63 functions as the Nucleophile in the catalytic mechanism. Tyrosine 122 is a substrate binding site.

The protein belongs to the tRNA pseudouridine synthase TruA family. Homodimer.

It catalyses the reaction uridine(38/39/40) in tRNA = pseudouridine(38/39/40) in tRNA. Formation of pseudouridine at positions 38, 39 and 40 in the anticodon stem and loop of transfer RNAs. The polypeptide is tRNA pseudouridine synthase A (Treponema denticola (strain ATCC 35405 / DSM 14222 / CIP 103919 / JCM 8153 / KCTC 15104)).